A 130-amino-acid chain; its full sequence is Transcription antitermination protein NusB (130 aa).

This sequence belongs to the NusB family.

In terms of biological role, involved in transcription antitermination. Required for transcription of ribosomal RNA (rRNA) genes. Binds specifically to the boxA antiterminator sequence of the ribosomal RNA (rrn) operons. The polypeptide is Transcription antitermination protein NusB (Bacillus anthracis (strain A0248)).